An 864-amino-acid polypeptide reads, in one-letter code: Leucine--tRNA ligase (864 aa).

The short motif at 42–52 (PYPSGKLHMGH) is the 'HIGH' region element. Residues 622-626 (KMSKS) carry the 'KMSKS' region motif. Position 625 (Lys625) interacts with ATP.

It belongs to the class-I aminoacyl-tRNA synthetase family.

The protein resides in the cytoplasm. It carries out the reaction tRNA(Leu) + L-leucine + ATP = L-leucyl-tRNA(Leu) + AMP + diphosphate. The protein is Leucine--tRNA ligase of Cellvibrio japonicus (strain Ueda107) (Pseudomonas fluorescens subsp. cellulosa).